The primary structure comprises 228 residues: Cytochrome c oxidase subunit 2 (228 aa).

At 1–26 (MPNWGQVMFQDAASSVMLQLVSFHDH) the chain is on the mitochondrial intermembrane side. A helical transmembrane segment spans residues 27 to 47 (ALLVLTLVLTVVGYALLALML). Residues 48-60 (NKQVNRYIMEAQT) are Mitochondrial matrix-facing. A helical transmembrane segment spans residues 61-81 (VETIWTILPALILLVLALPSL). Residues 82–228 (RILYITDEVS…FMSWVSNFKP (147 aa)) lie on the Mitochondrial intermembrane side of the membrane. Positions 161, 196, 198, 200, 204, and 207 each coordinate Cu cation. E198 is a binding site for Mg(2+).

The protein belongs to the cytochrome c oxidase subunit 2 family. Component of the cytochrome c oxidase (complex IV, CIV), a multisubunit enzyme composed of a catalytic core of 3 subunits and several supernumerary subunits. The complex exists as a monomer or a dimer and forms supercomplexes (SCs) in the inner mitochondrial membrane with ubiquinol-cytochrome c oxidoreductase (cytochrome b-c1 complex, complex III, CIII). The cofactor is Cu cation.

It localises to the mitochondrion inner membrane. The catalysed reaction is 4 Fe(II)-[cytochrome c] + O2 + 8 H(+)(in) = 4 Fe(III)-[cytochrome c] + 2 H2O + 4 H(+)(out). Its function is as follows. Component of the cytochrome c oxidase, the last enzyme in the mitochondrial electron transport chain which drives oxidative phosphorylation. The respiratory chain contains 3 multisubunit complexes succinate dehydrogenase (complex II, CII), ubiquinol-cytochrome c oxidoreductase (cytochrome b-c1 complex, complex III, CIII) and cytochrome c oxidase (complex IV, CIV), that cooperate to transfer electrons derived from NADH and succinate to molecular oxygen, creating an electrochemical gradient over the inner membrane that drives transmembrane transport and the ATP synthase. Cytochrome c oxidase is the component of the respiratory chain that catalyzes the reduction of oxygen to water. Electrons originating from reduced cytochrome c in the intermembrane space (IMS) are transferred via the dinuclear copper A center (CU(A)) of subunit 2 and heme A of subunit 1 to the active site in subunit 1, a binuclear center (BNC) formed by heme A3 and copper B (CU(B)). The BNC reduces molecular oxygen to 2 water molecules using 4 electrons from cytochrome c in the IMS and 4 protons from the mitochondrial matrix. The sequence is that of Cytochrome c oxidase subunit 2 (COII) from Lumbricus terrestris (Common earthworm).